Here is a 428-residue protein sequence, read N- to C-terminus: D-inositol 3-phosphate glycosyltransferase (428 aa).

His-5 provides a ligand contact to 1D-myo-inositol 3-phosphate. UDP-N-acetyl-alpha-D-glucosamine is bound by residues 11–12 and Gly-19; that span reads QP. 1D-myo-inositol 3-phosphate-binding positions include 16 to 21, Lys-74, Tyr-107, Thr-131, and Arg-151; that span reads DAGGMN. UDP-N-acetyl-alpha-D-glucosamine-binding residues include Arg-225, Lys-230, and Gln-283. 3 residues coordinate Mg(2+): Phe-292, Gln-293, and Ala-295. Residues Glu-305 and Glu-313 each contribute to the UDP-N-acetyl-alpha-D-glucosamine site. Position 319 (Thr-319) interacts with Mg(2+).

Belongs to the glycosyltransferase group 1 family. MshA subfamily. Homodimer.

The enzyme catalyses 1D-myo-inositol 3-phosphate + UDP-N-acetyl-alpha-D-glucosamine = 1D-myo-inositol 2-acetamido-2-deoxy-alpha-D-glucopyranoside 3-phosphate + UDP + H(+). Its function is as follows. Catalyzes the transfer of a N-acetyl-glucosamine moiety to 1D-myo-inositol 3-phosphate to produce 1D-myo-inositol 2-acetamido-2-deoxy-glucopyranoside 3-phosphate in the mycothiol biosynthesis pathway. The chain is D-inositol 3-phosphate glycosyltransferase from Mycobacterium leprae (strain Br4923).